The following is a 306-amino-acid chain: Armadillo repeat-containing protein 10 (306 aa).

Residues 7 to 29 form a helical membrane-spanning segment; that stretch reads VGWVAAGLVLGAGACYCIYRLTR. At serine 43 the chain carries Phosphoserine. Residue threonine 48 is modified to Phosphothreonine. An ARM repeat occupies 101–143; it reads GGIPIVGSKINSLNQSIKEKALNALNNLSVNVENQTKIKIYVR.

As to quaternary structure, interacts with the DNA-binding domain of p53/TP53.

The protein localises to the endoplasmic reticulum membrane. Its subcellular location is the mitochondrion outer membrane. In terms of biological role, may play a role in cell survival and cell growth. May suppress the transcriptional activity of p53/TP53. This chain is Armadillo repeat-containing protein 10 (Armc10), found in Rattus norvegicus (Rat).